The primary structure comprises 443 residues: Thymidine phosphorylase (443 aa).

It belongs to the thymidine/pyrimidine-nucleoside phosphorylase family. As to quaternary structure, homodimer.

It catalyses the reaction thymidine + phosphate = 2-deoxy-alpha-D-ribose 1-phosphate + thymine. Its pathway is pyrimidine metabolism; dTMP biosynthesis via salvage pathway; dTMP from thymine: step 1/2. In terms of biological role, the enzymes which catalyze the reversible phosphorolysis of pyrimidine nucleosides are involved in the degradation of these compounds and in their utilization as carbon and energy sources, or in the rescue of pyrimidine bases for nucleotide synthesis. This Photobacterium profundum (strain SS9) protein is Thymidine phosphorylase.